Reading from the N-terminus, the 220-residue chain is Response regulator ArlR (220 aa).

The 114-residue stretch at 3 to 116 folds into the Response regulatory domain; the sequence is KILIVEDEQN…ELLARIRAML (114 aa). Aspartate 52 is modified (4-aspartylphosphate). Residues 122–220 constitute a DNA-binding region (ompR/PhoB-type); sequence KNLIDIKGII…VRGVGYVVRQ (99 aa).

In terms of processing, phosphorylated by ArlS.

The protein localises to the cytoplasm. Functionally, member of the two-component regulatory system ArlS/ArlR. This chain is Response regulator ArlR (arlR), found in Staphylococcus saprophyticus subsp. saprophyticus (strain ATCC 15305 / DSM 20229 / NCIMB 8711 / NCTC 7292 / S-41).